The following is a 247-amino-acid chain: ATP synthase subunit a, chloroplastic (247 aa).

5 helical membrane passes run 38–58 (QVLI…IIAV), 95–115 (VPFI…GALL), 134–154 (INTT…AGLS), 199–219 (LVVV…VMFL), and 220–240 (GLFT…AYIG).

It belongs to the ATPase A chain family. As to quaternary structure, F-type ATPases have 2 components, CF(1) - the catalytic core - and CF(0) - the membrane proton channel. CF(1) has five subunits: alpha(3), beta(3), gamma(1), delta(1), epsilon(1). CF(0) has four main subunits: a, b, b' and c.

It is found in the plastid. Its subcellular location is the chloroplast thylakoid membrane. In terms of biological role, key component of the proton channel; it plays a direct role in the translocation of protons across the membrane. The chain is ATP synthase subunit a, chloroplastic from Zea mays (Maize).